A 211-amino-acid chain; its full sequence is Large ribosomal subunit protein uL4 (211 aa).

A disordered region spans residues 50 to 77; that stretch reads STLTKGEVSGGGKKPYKQKHTGKARQGS. Positions 63 to 72 are enriched in basic residues; it reads KPYKQKHTGK.

This sequence belongs to the universal ribosomal protein uL4 family. In terms of assembly, part of the 50S ribosomal subunit.

One of the primary rRNA binding proteins, this protein initially binds near the 5'-end of the 23S rRNA. It is important during the early stages of 50S assembly. It makes multiple contacts with different domains of the 23S rRNA in the assembled 50S subunit and ribosome. In terms of biological role, forms part of the polypeptide exit tunnel. This chain is Large ribosomal subunit protein uL4, found in Mycoplasma genitalium (strain ATCC 33530 / DSM 19775 / NCTC 10195 / G37) (Mycoplasmoides genitalium).